We begin with the raw amino-acid sequence, 177 residues long: Large ribosomal subunit protein uL6 (177 aa).

Belongs to the universal ribosomal protein uL6 family. In terms of assembly, part of the 50S ribosomal subunit.

In terms of biological role, this protein binds to the 23S rRNA, and is important in its secondary structure. It is located near the subunit interface in the base of the L7/L12 stalk, and near the tRNA binding site of the peptidyltransferase center. This Erythrobacter litoralis (strain HTCC2594) protein is Large ribosomal subunit protein uL6.